A 1080-amino-acid chain; its full sequence is Carbamoyl phosphate synthase large chain (1080 aa).

The segment at 1-403 (MPKRTDLETI…SLQKALRGLE (403 aa)) is carboxyphosphate synthetic domain. Positions 129, 169, 175, 176, 208, 210, 215, 241, 242, 243, 285, and 299 each coordinate ATP. Residues 133-328 (RVAMGEIGLD…IAKVAAKLAV (196 aa)) enclose the ATP-grasp 1 domain. 3 residues coordinate Mg(2+): Q285, E299, and N301. Mn(2+) contacts are provided by Q285, E299, and N301. Residues 404–554 (TGKIGLDPTG…YSTYEDECEA (151 aa)) are oligomerization domain. Residues 555 to 942 (LPTDRDKIMI…AFARAQEAGG (388 aa)) form a carbamoyl phosphate synthetic domain region. Residues 679-876 (QQLVDKLGLK…LAKIAARCMA (198 aa)) form the ATP-grasp 2 domain. Residues R715, R754, L756, E761, G787, V788, H789, S790, Q830, and E847 each coordinate ATP. Residues Q830, E847, and N849 each coordinate Mg(2+). Positions 830, 847, and 849 each coordinate Mn(2+). Residues 943–1080 (IKAPPLGKAF…LQELHKELEA (138 aa)) enclose the MGS-like domain. The interval 943–1080 (IKAPPLGKAF…LQELHKELEA (138 aa)) is allosteric domain.

The protein belongs to the CarB family. Composed of two chains; the small (or glutamine) chain promotes the hydrolysis of glutamine to ammonia, which is used by the large (or ammonia) chain to synthesize carbamoyl phosphate. Tetramer of heterodimers (alpha,beta)4. It depends on Mg(2+) as a cofactor. Mn(2+) serves as cofactor.

The enzyme catalyses hydrogencarbonate + L-glutamine + 2 ATP + H2O = carbamoyl phosphate + L-glutamate + 2 ADP + phosphate + 2 H(+). It carries out the reaction hydrogencarbonate + NH4(+) + 2 ATP = carbamoyl phosphate + 2 ADP + phosphate + 2 H(+). It participates in amino-acid biosynthesis; L-arginine biosynthesis; carbamoyl phosphate from bicarbonate: step 1/1. Its pathway is pyrimidine metabolism; UMP biosynthesis via de novo pathway; (S)-dihydroorotate from bicarbonate: step 1/3. Large subunit of the glutamine-dependent carbamoyl phosphate synthetase (CPSase). CPSase catalyzes the formation of carbamoyl phosphate from the ammonia moiety of glutamine, carbonate, and phosphate donated by ATP, constituting the first step of 2 biosynthetic pathways, one leading to arginine and/or urea and the other to pyrimidine nucleotides. The large subunit (synthetase) binds the substrates ammonia (free or transferred from glutamine from the small subunit), hydrogencarbonate and ATP and carries out an ATP-coupled ligase reaction, activating hydrogencarbonate by forming carboxy phosphate which reacts with ammonia to form carbamoyl phosphate. The sequence is that of Carbamoyl phosphate synthase large chain from Xanthomonas axonopodis pv. citri (strain 306).